Here is a 402-residue protein sequence, read N- to C-terminus: Type II NADH:quinone oxidoreductase (402 aa).

FAD-binding positions include 12–16 (GAGYA), 39–40 (NK), and valine 83. Glutamate 172 is a catalytic residue. Residues aspartate 302, 319 to 320 (AQ), and lysine 379 each bind FAD.

It belongs to the NADH dehydrogenase family. FAD is required as a cofactor.

The protein resides in the cell membrane. The catalysed reaction is a quinone + NADH + H(+) = a quinol + NAD(+). Its function is as follows. Alternative, nonproton pumping NADH:quinone oxidoreductase that delivers electrons to the respiratory chain by oxidation of NADH and reduction of quinones, and contributes to the regeneration of NAD(+). The polypeptide is Type II NADH:quinone oxidoreductase (Staphylococcus haemolyticus (strain JCSC1435)).